The following is a 400-amino-acid chain: Dihydrolipoyllysine-residue succinyltransferase component of 2-oxoglutarate dehydrogenase complex (400 aa).

The region spanning 2–77 is the Lipoyl-binding domain; that stretch reads GVKIIVPSLG…AVGEEIGDIN (76 aa). K43 carries the post-translational modification N6-lipoyllysine. Over residues 85–97 the composition is skewed to polar residues; sequence NSNEAAKPQTASQ. The disordered stretch occupies residues 85 to 113; it reads NSNEAAKPQTASQPVPEKVPKKPAVANNT. The Peripheral subunit-binding (PSBD) domain maps to 113–150; the sequence is TLAPSVQKLVTENKLDPNNIKGTGKDGRITKGDVLETM. Active-site residues include H371 and D375.

The protein belongs to the 2-oxoacid dehydrogenase family. As to quaternary structure, forms a 24-polypeptide structural core with octahedral symmetry. Part of the 2-oxoglutarate dehydrogenase (OGDH) complex composed of E1 (2-oxoglutarate dehydrogenase), E2 (dihydrolipoamide succinyltransferase) and E3 (dihydrolipoamide dehydrogenase); the complex contains multiple copies of the three enzymatic components (E1, E2 and E3). The cofactor is (R)-lipoate.

It carries out the reaction N(6)-[(R)-dihydrolipoyl]-L-lysyl-[protein] + succinyl-CoA = N(6)-[(R)-S(8)-succinyldihydrolipoyl]-L-lysyl-[protein] + CoA. The protein operates within amino-acid degradation; L-lysine degradation via saccharopine pathway; glutaryl-CoA from L-lysine: step 6/6. Its function is as follows. E2 component of the 2-oxoglutarate dehydrogenase (OGDH) complex which catalyzes the second step in the conversion of 2-oxoglutarate to succinyl-CoA and CO(2). The sequence is that of Dihydrolipoyllysine-residue succinyltransferase component of 2-oxoglutarate dehydrogenase complex (sucB) from Rickettsia bellii (strain RML369-C).